Here is a 165-residue protein sequence, read N- to C-terminus: Pro-MCH (165 aa).

The first 21 residues, 1–21 (MAKMSLSSYLLILTFSLFSQG), serve as a signal peptide directing secretion. A disordered region spans residues 68 to 88 (NDDSSFMNDEENKNSKNTGSK). I143 is subject to Isoleucine amide. C153 and C162 are disulfide-bonded.

The protein belongs to the melanin-concentrating hormone family. Post-translationally, pro-MCH is processed differentially in the brain and in peripheral organs producing two neuropeptides; NEI and MCH. A third peptide, NGE, may also be produced. Preferential processing in neurons by prohormone convertase 2 (PC2) generates NEI. MCH is generated in neurons of the lateral hypothalmic area by several prohormone convertases including PC1/3, PC2 and PC5/6.

It is found in the secreted. Its function is as follows. MCH may act as a neurotransmitter or neuromodulator in a broad array of neuronal functions directed toward the regulation of goal-directed behavior, such as food intake, and general arousal. This Canis lupus familiaris (Dog) protein is Pro-MCH (PMCH).